Here is a 148-residue protein sequence, read N- to C-terminus: Transcriptional regulator MraZ (148 aa).

SpoVT-AbrB domains follow at residues 5–51 (STQL…PQPV) and 80–123 (ACDV…DMAK).

The protein belongs to the MraZ family. In terms of assembly, forms oligomers.

It is found in the cytoplasm. It localises to the nucleoid. The polypeptide is Transcriptional regulator MraZ (Nitrosomonas eutropha (strain DSM 101675 / C91 / Nm57)).